A 344-amino-acid polypeptide reads, in one-letter code: Endoplasmic reticulum junction formation protein lunapark-1 (344 aa).

The Cytoplasmic segment spans residues 1 to 39; it reads MGNLFSRTKSPATELERVVLSIEDFKKRLQTISASNSST. The helical transmembrane segment at 40 to 60 threads the bilayer; the sequence is LYYYYMGVIIILSIAMAHTWL. The Lumenal segment spans residues 61–68; it reads RFDDPTKT. The chain crosses the membrane as a helical span at residues 69 to 89; that stretch reads YVACALVFGATVIVLTGRYII. Residues 90-344 are Cytoplasmic-facing; it reads NCFFAWRTNR…ADETAVVEKS (255 aa). A coiled-coil region spans residues 116-140; sequence DLVKETLKFKEAKEILDRYEEKTEA. 2 disordered regions span residues 136 to 155 and 171 to 192; these read EKTE…HQQK and QKRV…IAFD. The segment covering 140–155 has biased composition (polar residues); it reads AGNTPTENSKLIHQQK. The segment at 239 to 264 adopts a C4-type; plays a role in ER morphology zinc-finger fold; that stretch reads CSICHTHNGMSVPAEYPFISFRCFEC. Residues 275–344 are disordered; the sequence is PHLPITRPPM…ADETAVVEKS (70 aa). The segment covering 312–326 has biased composition (polar residues); that stretch reads PNPSTDLTPSASQHG. Residues 327 to 344 are compositionally biased toward basic and acidic residues; that stretch reads SDSEPEKNADETAVVEKS.

This sequence belongs to the lunapark family.

Its subcellular location is the endoplasmic reticulum membrane. Functionally, plays a role in tubular endoplasmic reticulum network formation and maintenance. May be involved in central nervous system development. Has a presynaptic role in neurotransmission. Likely to operate in synaptogenesis by regulating vesicular transport or localization. Required for correct localization of rab-3 and snb-1. The sequence is that of Endoplasmic reticulum junction formation protein lunapark-1 from Caenorhabditis briggsae.